Consider the following 227-residue polypeptide: UPF0173 metal-dependent hydrolase Bcer98_3294 (227 aa).

The protein belongs to the UPF0173 family.

This is UPF0173 metal-dependent hydrolase Bcer98_3294 from Bacillus cytotoxicus (strain DSM 22905 / CIP 110041 / 391-98 / NVH 391-98).